The sequence spans 587 residues: Pyruvate decarboxylase 3 (587 aa).

D48 and H135 together coordinate substrate. The interval 415–496 is thiamine pyrophosphate binding; that stretch reads DSWFNCQKLR…FLINNGGYTI (82 aa). Mg(2+) is bound by residues D464, N491, and G493. Substrate is bound at residue E497.

This sequence belongs to the TPP enzyme family. As to quaternary structure, homotetramer. The cofactor is a metal cation. Thiamine diphosphate serves as cofactor.

It carries out the reaction a 2-oxocarboxylate + H(+) = an aldehyde + CO2. This is Pyruvate decarboxylase 3 (PDC3) from Oryza sativa subsp. indica (Rice).